A 495-amino-acid chain; its full sequence is MSEEMNDQMLVRRQKLQELYDLGIDPFGSKFDRSGLSSDLKEEWDQYSKEELVEKEADSHVAIAGRLMTKRGKGKAGFAHVQDLAGQIQIYVRKDQVGDDEFDLWKNADLGDIVGVEGVMFKTNTGELSVKAKKFTLLTKSLRPLPDKFHGLQDIEQRYRQRYLDLITNEDSTRTFINRSKIIQEMRNYLNNKGFLEVETPMMHQIAGGAAARPFVTHHNALDATLYMRIAIELHLKRLIVGGLEKVYEIGRVFRNEGVSTRHNPEFTMIELYEAYADYHDIMDLTESMVRHIANEVLGSAKVQYNGETIDLESAWTRLHIVDAVKEATGVDFYEVKSDDEAKALAKEHGIEIKDTMKYGHILNEFFEQKVEETLIQPTFIYGHPTEISPLAKKNPEDPRFTDRFELFIVGREHANAFTELNDPIDQKGRFEAQLVEKAQGNDEAHEMDEDYIEALEYGMPPTGGLGIGIDRLVMLLTDSPSIRDVLLFPYMRQK.

2 residues coordinate Mg(2+): Glu406 and Glu413.

It belongs to the class-II aminoacyl-tRNA synthetase family. As to quaternary structure, homodimer. Mg(2+) is required as a cofactor.

Its subcellular location is the cytoplasm. It carries out the reaction tRNA(Lys) + L-lysine + ATP = L-lysyl-tRNA(Lys) + AMP + diphosphate. The chain is Lysine--tRNA ligase from Staphylococcus aureus (strain MW2).